The primary structure comprises 185 residues: TATA-box-binding protein 3 (185 aa).

A run of 2 repeats spans residues 7-84 (IENV…ANTL) and 100-178 (VQNI…KTEF).

It belongs to the TBP family.

Its function is as follows. General factor that plays a role in the activation of archaeal genes transcribed by RNA polymerase. Binds specifically to the TATA box promoter element which lies close to the position of transcription initiation. The polypeptide is TATA-box-binding protein 3 (Methanosarcina mazei (strain ATCC BAA-159 / DSM 3647 / Goe1 / Go1 / JCM 11833 / OCM 88) (Methanosarcina frisia)).